A 387-amino-acid chain; its full sequence is Flap endonuclease 1 (387 aa).

The N-domain stretch occupies residues 1–104 (MGILGLSKLI…GELAKRAERR (104 aa)). D34 is a Mg(2+) binding site. Residues R47 and R70 each contribute to the DNA site. D86, E158, E160, D179, and D181 together coordinate Mg(2+). The segment at 122 to 253 (GIEKFNRRLV…KRAIELINNY (132 aa)) is I-domain. E158 contributes to the DNA binding site. G231 and D233 together coordinate DNA. Position 233 (D233) interacts with Mg(2+). An interaction with PCNA region spans residues 336–344 (TQVRLDSFF). Residues 345–387 (KTLPSTPNATNAAKRKAEEAKKSANNKKAKTSGGGGGRGRRPK) form a disordered region.

This sequence belongs to the XPG/RAD2 endonuclease family. FEN1 subfamily. As to quaternary structure, interacts with PCNA. Three molecules of FEN1 bind to one PCNA trimer with each molecule binding to one PCNA monomer. PCNA stimulates the nuclease activity without altering cleavage specificity. Mg(2+) serves as cofactor. Phosphorylated. Phosphorylation upon DNA damage induces relocalization to the nuclear plasma.

It localises to the nucleus. It is found in the nucleolus. The protein resides in the nucleoplasm. The protein localises to the mitochondrion. Its function is as follows. Structure-specific nuclease with 5'-flap endonuclease and 5'-3' exonuclease activities involved in DNA replication and repair. During DNA replication, cleaves the 5'-overhanging flap structure that is generated by displacement synthesis when DNA polymerase encounters the 5'-end of a downstream Okazaki fragment. It enters the flap from the 5'-end and then tracks to cleave the flap base, leaving a nick for ligation. Also involved in the long patch base excision repair (LP-BER) pathway, by cleaving within the apurinic/apyrimidinic (AP) site-terminated flap. Acts as a genome stabilization factor that prevents flaps from equilibrating into structures that lead to duplications and deletions. Also possesses 5'-3' exonuclease activity on nicked or gapped double-stranded DNA, and exhibits RNase H activity. Also involved in replication and repair of rDNA and in repairing mitochondrial DNA. The protein is Flap endonuclease 1 of Drosophila yakuba (Fruit fly).